A 924-amino-acid polypeptide reads, in one-letter code: MQIPKYENKPFKPPRRVGSNKYTQLKPTATAVTTAPISKAKVTANLKRSISAGPTLNLAKKPNNLTSNENTRYFTIMYRKPTTKKHKTWSGDGYATLKANSDKLCFYNEAGKFLGSSMLPSDSDSLFETLFKAGSNEVQLDYELKENAEIRSAKEALSQNMGNPSPPTTSTTETVPSTKNDGGKYQMPLSQLFSLNTVKRFKSVTKQTNEHMTTVPKTSQNSKAKKYYPVFDVNKIDNPIVMNKNAAAEVDVIVDPLLGKFLRPHQREGVKFMYDCLMGLARPTIENPDIDCTTKSLVLENDSDISGCLLADDMGLGKTLMSITLIWTLIRQTPFASKVSCSQSGIPLTGLCKKILVVCPVTLIGNWKREFGKWLNLSRIGVLTLSSRNSPDMDKMAVRNFLKVQRTYQVLIIGYEKLLSVSEELEKNKHLIDMLVCDEGHRLKNGASKILNTLKSLDIRRKLLLTGTPIQNDLNEFFTIIDFINPGILGSFASFKRRFIIPITRARDTANRYNEELLKKGEERSKEMIEITKRFILRRTNAILEKYLPPKTDIILFCKPYSQQILAFKDILQGARLDFGQLTFSSSLGLITLLKKVCNSPGLVGSDPYYKSHIKDTQSQDSYSRSLNSGKLKVLMTLLEGIRKGTKEKVVVVSNYTQTLDIIENLMNMAGMSHCRLDGSIPAKQRDSIVTSFNRNPAIFGFLLSAKSGGVGLNLVGASRLILFDNDWNPSVDLQAMSRIHRDGQKKPCFIYRLVTTGCIDEKILQRQLMKNSLSQKFLGDSEMRNKESSNDDLFNKEDLKDLFSVHTDTKSNTHDLICSCDGLGEEIEYPETNQQQNTVELRKRSTTTWTSALDLQKKMNEAATNDDAKKSQYIRQCLVHYKHIDPARQDELFDEVITDSFTELKDSITFAFVKPGEICLREQ.

Basic and acidic residues predominate over residues 1–10 (MQIPKYENKP). 2 disordered regions span residues 1–21 (MQIPKYENKPFKPPRRVGSNK) and 155–183 (EALSQNMGNPSPPTTSTTETVPSTKNDGG). A compositionally biased stretch (low complexity) spans 168 to 178 (TTSTTETVPST). The Helicase ATP-binding domain occupies 299–487 (LENDSDISGC…FTIIDFINPG (189 aa)). Residue 346-353 (IPLTGLCK) coordinates ATP. The short motif at 472–475 (NDLN) is the DEGH box element. A Glycyl lysine isopeptide (Lys-Gly) (interchain with G-Cter in ubiquitin) cross-link involves residue Lys-615. The region spanning 631–790 (KLKVLMTLLE…DSEMRNKESS (160 aa)) is the Helicase C-terminal domain.

This sequence belongs to the SNF2/RAD54 helicase family. Interacts with RAD51 and DMC1.

The protein resides in the nucleus. The catalysed reaction is ATP + H2O = ADP + phosphate + H(+). Functionally, involved in the recombinational repair of double-strand breaks (DSB) in DNA during mitosis and meiosis. Has DNA dependent ATPase activity. Promotes D-loop (displacement loop) formation with RAD51 recombinase. Modifies the topology of double-stranded DNA during the D-loop reaction to facilitate the invasion of the homologous duplex molecule by the initiating single-stranded DNA substrate. Required for adaptation from G2/M checkpoint arrest induced by a double strand break, by participating in monitoring the extent of single-stranded DNA produced by resection of DNA ends. This role is distinct from its roles in recombination. Promotes colocalization of RAD51 and DMC1 during meiotic recombination. Involved in crossover interference. The chain is DNA repair and recombination protein RDH54 (RDH54) from Saccharomyces cerevisiae (strain JAY291) (Baker's yeast).